The sequence spans 335 residues: Nicotinate-nucleotide--dimethylbenzimidazole phosphoribosyltransferase (335 aa).

The active-site Proton acceptor is glutamate 304.

Belongs to the CobT family.

It carries out the reaction 5,6-dimethylbenzimidazole + nicotinate beta-D-ribonucleotide = alpha-ribazole 5'-phosphate + nicotinate + H(+). Its pathway is nucleoside biosynthesis; alpha-ribazole biosynthesis; alpha-ribazole from 5,6-dimethylbenzimidazole: step 1/2. Functionally, catalyzes the synthesis of alpha-ribazole-5'-phosphate from nicotinate mononucleotide (NAMN) and 5,6-dimethylbenzimidazole (DMB). The protein is Nicotinate-nucleotide--dimethylbenzimidazole phosphoribosyltransferase of Thermus thermophilus (strain ATCC 27634 / DSM 579 / HB8).